Consider the following 353-residue polypeptide: tRNA N6-adenosine threonylcarbamoyltransferase (353 aa).

Positions 109 and 113 each coordinate Fe cation. Substrate is bound by residues 136 to 140, D169, G182, D186, and N284; that span reads TVSGG. D312 serves as a coordination point for Fe cation.

It belongs to the KAE1 / TsaD family. It depends on Fe(2+) as a cofactor.

Its subcellular location is the cytoplasm. It carries out the reaction L-threonylcarbamoyladenylate + adenosine(37) in tRNA = N(6)-L-threonylcarbamoyladenosine(37) in tRNA + AMP + H(+). Its function is as follows. Required for the formation of a threonylcarbamoyl group on adenosine at position 37 (t(6)A37) in tRNAs that read codons beginning with adenine. Is involved in the transfer of the threonylcarbamoyl moiety of threonylcarbamoyl-AMP (TC-AMP) to the N6 group of A37, together with TsaE and TsaB. TsaD likely plays a direct catalytic role in this reaction. In Chlorobium limicola (strain DSM 245 / NBRC 103803 / 6330), this protein is tRNA N6-adenosine threonylcarbamoyltransferase.